The sequence spans 198 residues: MAKILVLYYSMYGHIETMAHAVAEGAKKVDGAEVIIKRVPETMPPEIFAKAGGKTQNAPVATPQELADYDAIIFGTPTRFGNMSGQMRTFLDQTGGLWASGALYGKLGSVFSSTGTGGGQEQTITSTWTTLAHHGMVIVPIGYAAQELFDVSHVRGGTPYGATTIAGGDGSRQPSQEELSIARYQGEYVAGLAVKLNG.

Residues 4 to 189 (ILVLYYSMYG…SIARYQGEYV (186 aa)) enclose the Flavodoxin-like domain. Residues 10 to 15 (SMYGHI) and 78 to 80 (TRF) contribute to the FMN site. Residue Tyr12 coordinates NAD(+). Trp98 contributes to the substrate binding site. FMN contacts are provided by residues 113 to 118 (STGTGG) and His133.

It belongs to the WrbA family. Requires FMN as cofactor.

It catalyses the reaction a quinone + NADH + H(+) = a quinol + NAD(+). The enzyme catalyses a quinone + NADPH + H(+) = a quinol + NADP(+). This chain is NAD(P)H dehydrogenase (quinone), found in Salmonella paratyphi B (strain ATCC BAA-1250 / SPB7).